Consider the following 308-residue polypeptide: MTQSLPSIFIDNGNCEIQPYVSLADMTTFRVGGAAEWFIAPHNLKELQASYAWANEQALPITFLGAGSNLLISDQGLPGLVISTRYLRQRTFDPETCQVTAYAGESLPKLAWQAAKRGWSGLEWAVGIPGTVGGALVMNAGAHGGCTADVLTEVHALDKDGTVQVLKPEHMAFQYRSSILQQSPKPVLLGVFQLHANQSAEQVKATTQSHLDHRLSTQPYDWPSCGSVFRNPLPRTAGWLIEQSGLKGYSLGGAQVAQKHANFILNSGNATATDIFNLIHYVQQKVEENWSLLLKPEVKMLGKFPQIT.

In terms of domain architecture, FAD-binding PCMH-type spans 30–213; the sequence is RVGGAAEWFI…KATTQSHLDH (184 aa). Arg-176 is an active-site residue. The Proton donor role is filled by Ser-227. The active site involves Glu-297.

It belongs to the MurB family. FAD serves as cofactor.

The protein resides in the cytoplasm. It catalyses the reaction UDP-N-acetyl-alpha-D-muramate + NADP(+) = UDP-N-acetyl-3-O-(1-carboxyvinyl)-alpha-D-glucosamine + NADPH + H(+). It participates in cell wall biogenesis; peptidoglycan biosynthesis. Cell wall formation. The protein is UDP-N-acetylenolpyruvoylglucosamine reductase of Acaryochloris marina (strain MBIC 11017).